A 128-amino-acid polypeptide reads, in one-letter code: Large ribosomal subunit protein bL17 (128 aa).

This sequence belongs to the bacterial ribosomal protein bL17 family. As to quaternary structure, part of the 50S ribosomal subunit. Contacts protein L32.

The protein is Large ribosomal subunit protein bL17 of Proteus mirabilis (strain HI4320).